Here is an 819-residue protein sequence, read N- to C-terminus: Protein EFR3 homolog A (819 aa).

S360, S363, S420, and S692 each carry phosphoserine.

This sequence belongs to the EFR3 family. In terms of assembly, component of a phosphatidylinositol 4-kinase (PI4K) complex, composed of PI4KA, EFR3 (EFR3A or EFR3B), TTC7 (TTC7A or TTC7B) and HYCC (HYCC1 or HYCC2). In terms of processing, palmitoylated at its N-terminus, anchoring the protein to the plasma membrane. In terms of tissue distribution, widely expressed. Expressed in neurons of the superior olivary complex of the auditory brainstem. Also expressed at lower levels in the cochlear nucleus, the lateral leminiscal nuclei and the inferior collicus.

Its subcellular location is the cell membrane. The protein resides in the cytoplasm. The protein localises to the cytosol. Functionally, component of a complex required to localize phosphatidylinositol 4-kinase (PI4K) to the plasma membrane. The complex acts as a regulator of phosphatidylinositol 4-phosphate (PtdIns(4)P) synthesis. In the complex, EFR3A probably acts as the membrane-anchoring component. Also involved in responsiveness to G-protein-coupled receptors; it is however unclear whether this role is direct or indirect. The polypeptide is Protein EFR3 homolog A (Mus musculus (Mouse)).